We begin with the raw amino-acid sequence, 256 residues long: MSSSSSSSAVFPLDHLAAPSPTEQLCYVHCNCCDTILAVGVPCSSLFKTVTVRCGHCANLLSVNLRGLLLPAPAPAPANQLHFGPSLLSPTSPHGLLDEVAFQTPSLLMEQAASASLSSITGRSSSSCASNAPAMQMPPAKPVQQEPELPKNAPASANRPPEKRQRVPSAYNRFIKDEIQRIKAGNPDISHREAFSAAAKNWAHFPHIHFGLMPDQGFKKTFKPQDGSEDILLKDSLYAAAAAAAAAAANMGVTPF.

The C4-type zinc-finger motif lies at 30–57 (CNCCDTILAVGVPCSSLFKTVTVRCGHC). Residues 127–168 (SCASNAPAMQMPPAKPVQQEPELPKNAPASANRPPEKRQRVP) form a disordered region.

Belongs to the YABBY family. Preferentially expressed in immature organs containing meristems and organ primordia. Expressed in phloem of developing vascular tissues of young seedling shoots. Expressed in the phloem of midvein vasculature of young leaves. Does not show polar expression pattern in leaf primordia.

The protein localises to the nucleus. In terms of biological role, seems to be associated with phloem cell differentiation. This chain is Protein YABBY 4 (YAB4), found in Oryza sativa subsp. japonica (Rice).